Reading from the N-terminus, the 72-residue chain is Sperm protein associated with the nucleus on the X chromosome N1 (72 aa).

The segment at 1 to 40 is disordered; the sequence is MEKPTSSTNGEKRKSPCDSNSKNDEMQETPNRDLVLEPSL. Positions 10–35 are enriched in basic and acidic residues; it reads GEKRKSPCDSNSKNDEMQETPNRDLV.

The protein belongs to the SPAN-X family.

The polypeptide is Sperm protein associated with the nucleus on the X chromosome N1 (SPANXN1) (Pan troglodytes (Chimpanzee)).